Reading from the N-terminus, the 85-residue chain is UPF0386 protein RHECIAT_CH0001945 (85 aa).

It belongs to the UPF0386 family.

The sequence is that of UPF0386 protein RHECIAT_CH0001945 from Rhizobium etli (strain CIAT 652).